A 540-amino-acid chain; its full sequence is CUB domain-containing protein 2 (540 aa).

Residues 1 to 24 (MLAELGACLLLAMVLLDSDPGTQA) form the signal peptide. Over 25–516 (MEGVKCGGVL…GTMVTQDTSD (492 aa)) the chain is Extracellular. 6 cysteine pairs are disulfide-bonded: cysteine 30–cysteine 56, cysteine 83–cysteine 106, cysteine 145–cysteine 171, cysteine 198–cysteine 218, cysteine 257–cysteine 283, and cysteine 314–cysteine 336. CUB domains follow at residues 30–143 (CGGV…YQKD), 145–255 (CGGV…YFSG), and 257–373 (CQEV…YIGV). The N-linked (GlcNAc...) asparagine glycan is linked to asparagine 40. The N-linked (GlcNAc...) asparagine glycan is linked to asparagine 267. 3 N-linked (GlcNAc...) asparagine glycosylation sites follow: asparagine 377, asparagine 435, and asparagine 436. Residues 517–537 (IVFLGLCILAGVLMIIAIVVL) form a helical membrane-spanning segment. The Cytoplasmic segment spans residues 538-540 (MLL).

Its subcellular location is the membrane. This is CUB domain-containing protein 2 (Cdcp2) from Mus musculus (Mouse).